The chain runs to 234 residues: GTP-binding protein YPT52 (234 aa).

GTP contacts are provided by residues 10-17 (GDSSVGKS), 66-70 (DTAGQ), and 111-114 (NKVG). 2 disordered regions span residues 131–151 (QETP…EEQK) and 206–234 (NRQI…SCCS). The span at 132 to 142 (ETPSTETSPDS) shows a compositional bias: polar residues. A phosphoserine mark is found at serine 139 and serine 142. A Glycyl lysine isopeptide (Lys-Gly) (interchain with G-Cter in ubiquitin) cross-link involves residue lysine 151. A compositionally biased stretch (polar residues) spans 217 to 234 (VDINLQRPSTNDPTSCCS). S-geranylgeranyl cysteine attachment occurs at residues cysteine 232 and cysteine 233.

This sequence belongs to the small GTPase superfamily. Rab family. In terms of assembly, interacts with ROY1, YIF1, YIP3, YIP4 and YIP5.

The protein resides in the cell membrane. It localises to the endoplasmic reticulum. In terms of biological role, required for transport in the endocytic pathway and for correct sorting of the vacuolar hydrolases suggesting a possible intersection of the endocytic with the vacuolar sorting pathway. May be involved in recruiting the MON1-CCZ1 complex to membranes enriched in phosphatidylinositol 3-phosphate (PtdIns[3]P) or other charged lipids, leading to recruitment of YPT7. This chain is GTP-binding protein YPT52 (YPT52), found in Saccharomyces cerevisiae (strain ATCC 204508 / S288c) (Baker's yeast).